The sequence spans 717 residues: UvrABC system protein C (717 aa).

The 80-residue stretch at 16–95 (DAPGVYRFHD…IKEYDPRFNV (80 aa)) folds into the GIY-YIG domain. Residues 208 to 243 (DTLIRKLDREMRQASEELEFERAARLRDDLEALRRA) form the UVR domain. Disordered stretches follow at residues 517–555 (TAAGNGLADTAAGEPEADVAVTPQEAERTGIDPETGRPR) and 696–717 (HAALAAGGGTGESRDNAEGESQ). Composition is skewed to basic and acidic residues over residues 541-553 (EAERTGIDPETGR) and 707-717 (ESRDNAEGESQ).

This sequence belongs to the UvrC family. In terms of assembly, interacts with UvrB in an incision complex.

It is found in the cytoplasm. In terms of biological role, the UvrABC repair system catalyzes the recognition and processing of DNA lesions. UvrC both incises the 5' and 3' sides of the lesion. The N-terminal half is responsible for the 3' incision and the C-terminal half is responsible for the 5' incision. The protein is UvrABC system protein C of Saccharopolyspora erythraea (strain ATCC 11635 / DSM 40517 / JCM 4748 / NBRC 13426 / NCIMB 8594 / NRRL 2338).